The following is a 403-amino-acid chain: S-adenosylmethionine synthase (403 aa).

Residue histidine 15 coordinates ATP. Mg(2+) is bound at residue aspartate 17. Glutamate 43 serves as a coordination point for K(+). The L-methionine site is built by glutamate 56 and glutamine 99. Positions 99–109 are flexible loop; the sequence is QSPDINQGVDR. ATP-binding positions include 166–168, 232–233, aspartate 241, 247–248, alanine 264, and lysine 268; these read DAK, KF, and RK. Residue aspartate 241 participates in L-methionine binding. Position 272 (lysine 272) interacts with L-methionine.

The protein belongs to the AdoMet synthase family. As to quaternary structure, homotetramer; dimer of dimers. Mg(2+) is required as a cofactor. Requires K(+) as cofactor.

It localises to the cytoplasm. It catalyses the reaction L-methionine + ATP + H2O = S-adenosyl-L-methionine + phosphate + diphosphate. It functions in the pathway amino-acid biosynthesis; S-adenosyl-L-methionine biosynthesis; S-adenosyl-L-methionine from L-methionine: step 1/1. Catalyzes the formation of S-adenosylmethionine (AdoMet) from methionine and ATP. The overall synthetic reaction is composed of two sequential steps, AdoMet formation and the subsequent tripolyphosphate hydrolysis which occurs prior to release of AdoMet from the enzyme. The polypeptide is S-adenosylmethionine synthase (Xanthomonas campestris pv. campestris (strain 8004)).